Reading from the N-terminus, the 441-residue chain is uncharacterized protein (441 aa).

A compositionally biased stretch (low complexity) spans 121-143 (TLSPSIVSEQQQQQQQQQQQQQQ). Disordered regions lie at residues 121–146 (TLSP…QAIS) and 371–392 (SDAD…TAPN). Residues 382–391 (PTSAPSTTAP) show a composition bias toward polar residues.

This is an uncharacterized protein from Dictyostelium discoideum (Social amoeba).